The primary structure comprises 450 residues: Tubulin alpha-4 chain (450 aa).

Residue Q11 coordinates GTP. At K40 the chain carries N6-acetyllysine. E71, G144, T145, T179, N206, and N228 together coordinate GTP. E71 contacts Mg(2+). E254 is a catalytic residue. Positions 431-450 are disordered; it reads DYEEVGAESGEGDEGDEEEY.

Belongs to the tubulin family. In terms of assembly, dimer of alpha and beta chains. A typical microtubule is a hollow water-filled tube with an outer diameter of 25 nm and an inner diameter of 15 nM. Alpha-beta heterodimers associate head-to-tail to form protofilaments running lengthwise along the microtubule wall with the beta-tubulin subunit facing the microtubule plus end conferring a structural polarity. Microtubules usually have 13 protofilaments but different protofilament numbers can be found in some organisms and specialized cells. Mg(2+) is required as a cofactor. In terms of processing, undergoes a tyrosination/detyrosination cycle, the cyclic removal and re-addition of a C-terminal tyrosine residue by the enzymes tubulin tyrosine carboxypeptidase (TTCP) and tubulin tyrosine ligase (TTL), respectively. Post-translationally, acetylation of alpha chains at Lys-40 stabilizes microtubules and affects affinity and processivity of microtubule motors. This modification has a role in multiple cellular functions, ranging from cell motility, cell cycle progression or cell differentiation to intracellular trafficking and signaling.

It localises to the cytoplasm. The protein localises to the cytoskeleton. It catalyses the reaction GTP + H2O = GDP + phosphate + H(+). Tubulin is the major constituent of microtubules, a cylinder consisting of laterally associated linear protofilaments composed of alpha- and beta-tubulin heterodimers. Microtubules grow by the addition of GTP-tubulin dimers to the microtubule end, where a stabilizing cap forms. Below the cap, tubulin dimers are in GDP-bound state, owing to GTPase activity of alpha-tubulin. The protein is Tubulin alpha-4 chain of Gossypium hirsutum (Upland cotton).